A 173-amino-acid polypeptide reads, in one-letter code: Bifunctional protein PyrR (173 aa).

The short motif at 93–105 (IILIDDVLYTGRT) is the PRPP-binding element.

It belongs to the purine/pyrimidine phosphoribosyltransferase family. PyrR subfamily. In terms of assembly, homodimer and homohexamer; in equilibrium.

It carries out the reaction UMP + diphosphate = 5-phospho-alpha-D-ribose 1-diphosphate + uracil. Regulates transcriptional attenuation of the pyrimidine nucleotide (pyr) operon by binding in a uridine-dependent manner to specific sites on pyr mRNA. This disrupts an antiterminator hairpin in the RNA and favors formation of a downstream transcription terminator, leading to a reduced expression of downstream genes. In terms of biological role, also displays a weak uracil phosphoribosyltransferase activity which is not physiologically significant. The chain is Bifunctional protein PyrR from Streptococcus agalactiae serotype Ia (strain ATCC 27591 / A909 / CDC SS700).